A 581-amino-acid polypeptide reads, in one-letter code: Probable peptidoglycan D,D-transpeptidase PenA (581 aa).

The chain crosses the membrane as a helical span at residues 28–48 (ISFVLMAMAVLFACLIARGLY). S310 functions as the Acyl-ester intermediate in the catalytic mechanism.

It belongs to the transpeptidase family. FtsI subfamily.

The protein resides in the cell inner membrane. The catalysed reaction is Preferential cleavage: (Ac)2-L-Lys-D-Ala-|-D-Ala. Also transpeptidation of peptidyl-alanyl moieties that are N-acyl substituents of D-alanine.. It participates in cell wall biogenesis; peptidoglycan biosynthesis. In terms of biological role, catalyzes cross-linking of the peptidoglycan cell wall at the division septum. The protein is Probable peptidoglycan D,D-transpeptidase PenA of Neisseria gonorrhoeae.